The primary structure comprises 147 residues: Myoglobin (147 aa).

The region spanning 2–141 (HDAELVLKCW…VIGDIDTYYK (140 aa)) is the Globin domain. Position 60 (His-60) interacts with nitrite. His-60 is a binding site for O2. Heme b is bound at residue His-89.

This sequence belongs to the globin family. Monomeric.

The protein localises to the cytoplasm. It is found in the sarcoplasm. The catalysed reaction is Fe(III)-heme b-[protein] + nitric oxide + H2O = Fe(II)-heme b-[protein] + nitrite + 2 H(+). It carries out the reaction H2O2 + AH2 = A + 2 H2O. Monomeric heme protein which primary function is to store oxygen and facilitate its diffusion within muscle tissues. Reversibly binds oxygen through a pentacoordinated heme iron and enables its timely and efficient release as needed during periods of heightened demand. Depending on the oxidative conditions of tissues and cells, and in addition to its ability to bind oxygen, it also has a nitrite reductase activity whereby it regulates the production of bioactive nitric oxide. Under stress conditions, like hypoxia and anoxia, it also protects cells against reactive oxygen species thanks to its pseudoperoxidase activity. This is Myoglobin (mb) from Cyprinus carpio (Common carp).